The sequence spans 308 residues: Ornithine carbamoyltransferase (308 aa).

Carbamoyl phosphate contacts are provided by residues 56–59, Gln-83, Arg-107, and 134–137; these read STRT and HPCQ. Residues Asn-165, Asp-225, and 229–230 each bind L-ornithine; that span reads SM. Carbamoyl phosphate-binding positions include 266-267 and Arg-294; that span reads CL.

It belongs to the aspartate/ornithine carbamoyltransferase superfamily. OTCase family.

It is found in the cytoplasm. It catalyses the reaction carbamoyl phosphate + L-ornithine = L-citrulline + phosphate + H(+). Its pathway is amino-acid degradation; L-arginine degradation via ADI pathway; carbamoyl phosphate from L-arginine: step 2/2. Functionally, reversibly catalyzes the transfer of the carbamoyl group from carbamoyl phosphate (CP) to the N(epsilon) atom of ornithine (ORN) to produce L-citrulline. This chain is Ornithine carbamoyltransferase, found in Cereibacter sphaeroides (strain KD131 / KCTC 12085) (Rhodobacter sphaeroides).